A 318-amino-acid chain; its full sequence is Adenylate isopentenyltransferase 4 (318 aa).

Position 12–19 (12–19 (GATGSGKS)) interacts with ATP.

The protein belongs to the IPP transferase family. The cofactor is Mg(2+). As to expression, expressed in immature seeds with highest expression in the chalazal endosperm.

It is found in the cytoplasm. The catalysed reaction is dimethylallyl diphosphate + ADP = N(6)-(dimethylallyl)adenosine 5'-diphosphate + diphosphate. The enzyme catalyses dimethylallyl diphosphate + ATP = N(6)-(dimethylallyl)adenosine 5'-triphosphate + diphosphate. Functionally, involved in cytokinin biosynthesis. Catalyzes the transfer of an isopentenyl group from dimethylallyl diphosphate (DMAPP) to ATP and ADP, but not to AMP. Has no DMAPP:tRNA isopentenyltransferase activity. The chain is Adenylate isopentenyltransferase 4 (IPT4) from Arabidopsis thaliana (Mouse-ear cress).